Reading from the N-terminus, the 126-residue chain is Aspartate 1-decarboxylase (126 aa).

Residue Ser25 is the Schiff-base intermediate with substrate; via pyruvic acid of the active site. Pyruvic acid (Ser) is present on Ser25. Thr57 provides a ligand contact to substrate. Tyr58 functions as the Proton donor in the catalytic mechanism. 73–75 (GAA) provides a ligand contact to substrate.

The protein belongs to the PanD family. In terms of assembly, heterooctamer of four alpha and four beta subunits. It depends on pyruvate as a cofactor. In terms of processing, is synthesized initially as an inactive proenzyme, which is activated by self-cleavage at a specific serine bond to produce a beta-subunit with a hydroxyl group at its C-terminus and an alpha-subunit with a pyruvoyl group at its N-terminus.

It is found in the cytoplasm. The catalysed reaction is L-aspartate + H(+) = beta-alanine + CO2. It functions in the pathway cofactor biosynthesis; (R)-pantothenate biosynthesis; beta-alanine from L-aspartate: step 1/1. In terms of biological role, catalyzes the pyruvoyl-dependent decarboxylation of aspartate to produce beta-alanine. In Edwardsiella ictaluri (strain 93-146), this protein is Aspartate 1-decarboxylase.